Here is a 653-residue protein sequence, read N- to C-terminus: Bifunctional lysine-specific demethylase and histidyl-hydroxylase NO66 (653 aa).

Low complexity predominate over residues Met-1–Ser-12. Disordered regions lie at residues Met-1 to Ala-50 and Phe-65 to Thr-137. A compositionally biased stretch (polar residues) spans Gln-13 to Thr-26. Ser-44 is subject to Phosphoserine. Residues Ser-72–Lys-86 are compositionally biased toward low complexity. Residue Ser-131 is modified to Phosphoserine. Position 137 is a phosphothreonine (Thr-137). Ser-138 carries the post-translational modification Phosphoserine. The tract at residues Ala-184–Asp-208 is disordered. Residues Asn-194–Asp-208 are compositionally biased toward basic and acidic residues. The region spanning Phe-300–Val-450 is the JmjC domain. Positions 351, 353, and 416 each coordinate Fe cation.

Belongs to the ROX family. NO66 subfamily. Fe(2+) serves as cofactor.

Its subcellular location is the nucleus. It catalyses the reaction N(6),N(6)-dimethyl-L-lysyl(36)-[histone H3] + 2 2-oxoglutarate + 2 O2 = L-lysyl(36)-[histone H3] + 2 formaldehyde + 2 succinate + 2 CO2. In terms of biological role, oxygenase that can act as both a histone lysine demethylase and a ribosomal histidine hydroxylase. Specifically demethylates 'Lys-4' (H3K4me) and 'Lys-36' (H3K36me) of histone H3, thereby playing a central role in histone code. The protein is Bifunctional lysine-specific demethylase and histidyl-hydroxylase NO66 of Drosophila melanogaster (Fruit fly).